The primary structure comprises 132 residues: MRHRLSGRQLGRNSSHRKAMFRNMSASLVEHELIKTTLPKAKELRRVIEPLITLAKVDSVANRRLANARLQSKSAVGKLFSELGKRYATRPGGYVRILKCGFRAGDKAPMAYVELVDRPARAVETAVEVDAE.

Belongs to the bacterial ribosomal protein bL17 family. In terms of assembly, part of the 50S ribosomal subunit. Contacts protein L32.

The protein is Large ribosomal subunit protein bL17 of Cellvibrio japonicus (strain Ueda107) (Pseudomonas fluorescens subsp. cellulosa).